A 447-amino-acid chain; its full sequence is Tubulin beta-2 chain (447 aa).

Positions 11, 69, 138, 142, 143, 144, 204, and 226 each coordinate GTP. Glutamate 69 provides a ligand contact to Mg(2+). Residues glutamine 426–valine 447 form a disordered region. Positions glycine 429–valine 447 are enriched in acidic residues.

It belongs to the tubulin family. In terms of assembly, dimer of alpha and beta chains. A typical microtubule is a hollow water-filled tube with an outer diameter of 25 nm and an inner diameter of 15 nM. Alpha-beta heterodimers associate head-to-tail to form protofilaments running lengthwise along the microtubule wall with the beta-tubulin subunit facing the microtubule plus end conferring a structural polarity. Microtubules usually have 13 protofilaments but different protofilament numbers can be found in some organisms and specialized cells. Mg(2+) serves as cofactor.

Its subcellular location is the cytoplasm. It is found in the cytoskeleton. Its function is as follows. Tubulin is the major constituent of microtubules, a cylinder consisting of laterally associated linear protofilaments composed of alpha- and beta-tubulin heterodimers. Microtubules grow by the addition of GTP-tubulin dimers to the microtubule end, where a stabilizing cap forms. Below the cap, tubulin dimers are in GDP-bound state, owing to GTPase activity of alpha-tubulin. The protein is Tubulin beta-2 chain (TUB2) of Colletotrichum graminicola (Maize anthracnose fungus).